We begin with the raw amino-acid sequence, 758 residues long: Vitamin K-dependent gamma-carboxylase (758 aa).

Residues M1–G31 are disordered. A2 bears the N-acetylalanine mark. Over A2–D60 the chain is Cytoplasmic. Residues P12 to A22 are compositionally biased toward basic and acidic residues. Residues P61–Q81 traverse the membrane as a helical segment. Residues E82–D113 lie on the Lumenal side of the membrane. An intrachain disulfide couples C99 to C450. The chain crosses the membrane as a helical span at residues W114 to R134. Residues Y135–R136 are Cytoplasmic-facing. Residues I137–W157 traverse the membrane as a helical segment. The Lumenal segment spans residues N158–Q292. The helical transmembrane segment at L293–P313 threads the bilayer. At E314 to R361 the chain is on the cytoplasmic side. A helical membrane pass occupies residues L362–F382. At L383–F758 the chain is on the lumenal side. The segment at P727–F758 is disordered. A compositionally biased stretch (low complexity) spans P734–N750.

The protein belongs to the vitamin K-dependent gamma-carboxylase family. As to quaternary structure, monomer. May interact with CALU.

It localises to the endoplasmic reticulum membrane. It carries out the reaction 4-carboxy-L-glutamyl-[protein] + 2,3-epoxyphylloquinone + H2O + H(+) = phylloquinol + L-glutamyl-[protein] + CO2 + O2. Mediates the vitamin K-dependent carboxylation of glutamate residues to calcium-binding gamma-carboxyglutamate (Gla) residues with the concomitant conversion of the reduced hydroquinone form of vitamin K to vitamin K epoxide. Catalyzes gamma-carboxylation of various proteins, such as blood coagulation factors (F2, F7, F9 and F10), osteocalcin (BGLAP) or matrix Gla protein (MGP). The chain is Vitamin K-dependent gamma-carboxylase (GGCX) from Delphinapterus leucas (Beluga whale).